Consider the following 503-residue polypeptide: Maturase K (503 aa).

This sequence belongs to the intron maturase 2 family. MatK subfamily.

It localises to the plastid. Its subcellular location is the chloroplast. Usually encoded in the trnK tRNA gene intron. Probably assists in splicing its own and other chloroplast group II introns. This chain is Maturase K, found in Liquidambar formosana (Formosan gum).